The sequence spans 259 residues: Flagellar L-ring protein (259 aa).

A signal peptide spans 1–15 (MKRISLIALVTIMSG). A lipid anchor (N-palmitoyl cysteine) is attached at C16. The S-diacylglycerol cysteine moiety is linked to residue C16.

The protein belongs to the FlgH family. In terms of assembly, the basal body constitutes a major portion of the flagellar organelle and consists of four rings (L,P,S, and M) mounted on a central rod.

The protein localises to the cell outer membrane. It is found in the bacterial flagellum basal body. Functionally, assembles around the rod to form the L-ring and probably protects the motor/basal body from shearing forces during rotation. The protein is Flagellar L-ring protein of Vibrio vulnificus (strain CMCP6).